We begin with the raw amino-acid sequence, 1032 residues long: Histone lysine demethylase PHF8 (1032 aa).

A PHD-type zinc finger spans residues P5 to T56. Residues R65–P83 are linker. Residues F199–K355 enclose the JmjC domain. T248 is a substrate binding site. Fe cation contacts are provided by H251 and D253. Residue K268 coordinates substrate. Position 323 (H323) interacts with Fe cation. 5 disordered regions span residues S455–E515, Q577–D660, L697–A857, Q875–V923, and E943–K1015. A compositionally biased stretch (polar residues) spans Q473–H483. Residues A583–S592 show a composition bias toward low complexity. Residues P620 to L632 are compositionally biased toward basic residues. A compositionally biased stretch (basic and acidic residues) spans P644 to G655. Low complexity-rich tracts occupy residues S699–S710 and P724–I739. Over residues P774–R784 the composition is skewed to basic residues. The segment covering K848–A857 has biased composition (basic and acidic residues). Over residues I882–K891 the composition is skewed to basic residues. The segment covering S970–P990 has biased composition (low complexity).

It belongs to the JHDM1 histone demethylase family. JHDM1D subfamily. Fe(2+) serves as cofactor.

It is found in the nucleus. It localises to the nucleolus. It catalyses the reaction N(6),N(6)-dimethyl-L-lysyl(36)-[histone H3] + 2 2-oxoglutarate + 2 O2 = L-lysyl(36)-[histone H3] + 2 formaldehyde + 2 succinate + 2 CO2. The catalysed reaction is N(6),N(6)-dimethyl-L-lysyl(9)-[histone H3] + 2 2-oxoglutarate + 2 O2 = L-lysyl(9)-[histone H3] + 2 formaldehyde + 2 succinate + 2 CO2. In terms of biological role, histone lysine demethylase with selectivity for the di- and monomethyl states that plays a key role cell cycle progression, rDNA transcription and brain development. Demethylates mono- and dimethylated histone H3 'Lys-9' residue (H3K9Me1 and H3K9Me2), dimethylated H3 'Lys-27' (H3K27Me2) and monomethylated histone H4 'Lys-20' residue (H4K20Me1). Acts as a transcription activator as H3K9Me1, H3K9Me2, H3K27Me2 and H4K20Me1 are epigenetic repressive marks. Involved in cell cycle progression by being required to control G1-S transition. Acts as a coactivator of rDNA transcription, by activating polymerase I (pol I) mediated transcription of rRNA genes. Has activity toward H4K20Me1 only when nucleosome is used as a substrate and when not histone octamer is used as substrate. Required for brain development, probably by regulating expression of neuron-specific genes. The polypeptide is Histone lysine demethylase PHF8 (phf8) (Danio rerio (Zebrafish)).